Reading from the N-terminus, the 101-residue chain is Small ribosomal subunit protein uS14 (101 aa).

It belongs to the universal ribosomal protein uS14 family. Part of the 30S ribosomal subunit. Contacts proteins S3 and S10.

Functionally, binds 16S rRNA, required for the assembly of 30S particles and may also be responsible for determining the conformation of the 16S rRNA at the A site. The protein is Small ribosomal subunit protein uS14 of Paenarthrobacter aurescens (strain TC1).